The primary structure comprises 114 residues: UPF0342 protein LCABL_19440 (114 aa).

This sequence belongs to the UPF0342 family.

The chain is UPF0342 protein LCABL_19440 from Lacticaseibacillus casei (strain BL23) (Lactobacillus casei).